A 61-amino-acid chain; its full sequence is Small ribosomal subunit protein uS14 (61 aa).

Zn(2+) contacts are provided by Cys-24, Cys-27, Cys-40, and Cys-43.

It belongs to the universal ribosomal protein uS14 family. Zinc-binding uS14 subfamily. As to quaternary structure, part of the 30S ribosomal subunit. Contacts proteins S3 and S10. Zn(2+) serves as cofactor.

Its function is as follows. Binds 16S rRNA, required for the assembly of 30S particles and may also be responsible for determining the conformation of the 16S rRNA at the A site. The chain is Small ribosomal subunit protein uS14 from Sulfurimonas denitrificans (strain ATCC 33889 / DSM 1251) (Thiomicrospira denitrificans (strain ATCC 33889 / DSM 1251)).